The chain runs to 181 residues: SAGA-associated factor 11 (181 aa).

The SGF11-type zinc finger occupies 93-114 (FNCMNCGRQIVAGRFAPHLEKC). Residues 116–125 (GKGRKARAKT) are compositionally biased toward basic residues. Positions 116–181 (GKGRKARAKT…FTVRENVKGD (66 aa)) are disordered. The span at 126–153 (TRSTTAAQNRNARRSPNPRYSPYPNSAS) shows a compositional bias: low complexity.

This sequence belongs to the SGF11 family. As to quaternary structure, component of a deubiquitination module (DUB module) formed by ENY2, SGF11, and UBP22 in Arabidopsis. Interacts directly with ENY2 and UBP22. Interacts with DDA1. In terms of processing, ubiquitinated in DET1-dependent manner. Ubiquitination probably leads to its subsequent proteasomal degradation.

The protein resides in the nucleus. It localises to the nucleoplasm. In terms of biological role, component of a deubiquitination module (DUB module) that specifically deubiquinates monoubiquinated histone H2B (H2Bub). Does not seem to be a component of the TREX-2 complex. Seems to act independently of the SAGA multiprotein complex. The DUB module is responsible for the major H2Bub deubiquitinase activity in Arabidopsis. The sequence is that of SAGA-associated factor 11 from Arabidopsis thaliana (Mouse-ear cress).